A 376-amino-acid polypeptide reads, in one-letter code: Queuine tRNA-ribosyltransferase (376 aa).

Catalysis depends on aspartate 93, which acts as the Proton acceptor. Substrate-binding positions include 93-97 (DSGGF), aspartate 147, glutamine 191, and glycine 218. Positions 249–255 (GVGKPED) are RNA binding. Aspartate 268 serves as the catalytic Nucleophile. The RNA binding; important for wobble base 34 recognition stretch occupies residues 273–277 (TRNAR). Residues cysteine 306, cysteine 308, cysteine 311, and histidine 337 each contribute to the Zn(2+) site.

Belongs to the queuine tRNA-ribosyltransferase family. In terms of assembly, homodimer. Within each dimer, one monomer is responsible for RNA recognition and catalysis, while the other monomer binds to the replacement base PreQ1. Zn(2+) is required as a cofactor.

The enzyme catalyses 7-aminomethyl-7-carbaguanine + guanosine(34) in tRNA = 7-aminomethyl-7-carbaguanosine(34) in tRNA + guanine. Its pathway is tRNA modification; tRNA-queuosine biosynthesis. In terms of biological role, catalyzes the base-exchange of a guanine (G) residue with the queuine precursor 7-aminomethyl-7-deazaguanine (PreQ1) at position 34 (anticodon wobble position) in tRNAs with GU(N) anticodons (tRNA-Asp, -Asn, -His and -Tyr). Catalysis occurs through a double-displacement mechanism. The nucleophile active site attacks the C1' of nucleotide 34 to detach the guanine base from the RNA, forming a covalent enzyme-RNA intermediate. The proton acceptor active site deprotonates the incoming PreQ1, allowing a nucleophilic attack on the C1' of the ribose to form the product. After dissociation, two additional enzymatic reactions on the tRNA convert PreQ1 to queuine (Q), resulting in the hypermodified nucleoside queuosine (7-(((4,5-cis-dihydroxy-2-cyclopenten-1-yl)amino)methyl)-7-deazaguanosine). The sequence is that of Queuine tRNA-ribosyltransferase from Histophilus somni (strain 129Pt) (Haemophilus somnus).